Here is a 211-residue protein sequence, read N- to C-terminus: Pyruvate dehydrogenase E1 component subunit beta, mitochondrial (211 aa).

Tyrosine 31 is subject to Phosphotyrosine. Positions 48, 96, 97, 99, and 101 each coordinate K(+).

In terms of assembly, heterotetramer of two PDHA1 and two PDHB subunits. The heterotetramer interacts with DLAT, and is part of the multimeric pyruvate dehydrogenase complex that contains multiple copies of pyruvate dehydrogenase (E1), dihydrolipoamide acetyltransferase (DLAT, E2) and lipoamide dehydrogenase (DLD, E3). These subunits are bound to an inner core composed of about 48 DLAT and 12 PDHX molecules. Interacts with DLAT. It depends on thiamine diphosphate as a cofactor.

Its subcellular location is the mitochondrion matrix. The catalysed reaction is N(6)-[(R)-lipoyl]-L-lysyl-[protein] + pyruvate + H(+) = N(6)-[(R)-S(8)-acetyldihydrolipoyl]-L-lysyl-[protein] + CO2. Its function is as follows. The pyruvate dehydrogenase complex catalyzes the overall conversion of pyruvate to acetyl-CoA and CO(2), and thereby links the glycolytic pathway to the tricarboxylic cycle. The polypeptide is Pyruvate dehydrogenase E1 component subunit beta, mitochondrial (Mesocricetus auratus (Golden hamster)).